Consider the following 485-residue polypeptide: Glutamyl-tRNA(Gln) amidotransferase subunit A (485 aa).

Residues K79 and S154 each act as charge relay system in the active site. S178 functions as the Acyl-ester intermediate in the catalytic mechanism.

The protein belongs to the amidase family. GatA subfamily. Heterotrimer of A, B and C subunits.

The enzyme catalyses L-glutamyl-tRNA(Gln) + L-glutamine + ATP + H2O = L-glutaminyl-tRNA(Gln) + L-glutamate + ADP + phosphate + H(+). Allows the formation of correctly charged Gln-tRNA(Gln) through the transamidation of misacylated Glu-tRNA(Gln) in organisms which lack glutaminyl-tRNA synthetase. The reaction takes place in the presence of glutamine and ATP through an activated gamma-phospho-Glu-tRNA(Gln). The sequence is that of Glutamyl-tRNA(Gln) amidotransferase subunit A from Staphylococcus carnosus (strain TM300).